A 201-amino-acid polypeptide reads, in one-letter code: Orotate phosphoribosyltransferase (201 aa).

Position 113–121 (113–121 (EDIITTGKS)) interacts with 5-phospho-alpha-D-ribose 1-diphosphate. The orotate site is built by threonine 117 and arginine 145.

The protein belongs to the purine/pyrimidine phosphoribosyltransferase family. PyrE subfamily. As to quaternary structure, homodimer. The cofactor is Mg(2+).

The enzyme catalyses orotidine 5'-phosphate + diphosphate = orotate + 5-phospho-alpha-D-ribose 1-diphosphate. It participates in pyrimidine metabolism; UMP biosynthesis via de novo pathway; UMP from orotate: step 1/2. In terms of biological role, catalyzes the transfer of a ribosyl phosphate group from 5-phosphoribose 1-diphosphate to orotate, leading to the formation of orotidine monophosphate (OMP). This is Orotate phosphoribosyltransferase from Helicobacter pylori (strain ATCC 700392 / 26695) (Campylobacter pylori).